The following is a 379-amino-acid chain: Protein FAM53B (379 aa).

Disordered regions lie at residues 206 to 257 (CPAE…HKQR) and 302 to 348 (AQND…AGKE). Positions 212–236 (SPESTPELQRRSGQSGLARSRSQPC) are enriched in polar residues. A compositionally biased stretch (basic residues) spans 239–249 (NHQKIGVKRRR). The Nuclear localization signal signature appears at 246–249 (KRRR). Residues 326–342 (QSDSSSADALIHQSESS) are compositionally biased toward polar residues.

The protein belongs to the FAM53 family. Interacts with ctnnb1. As to expression, mainly expressed in proliferating tissues.

It is found in the nucleus. Acts as a regulator of Wnt signaling pathway by regulating beta-catenin (ctnnb1) nuclear localization. Required for appendage regeneration by regulating cell proliferation. The sequence is that of Protein FAM53B from Danio rerio (Zebrafish).